A 291-amino-acid chain; its full sequence is Acetyl-coenzyme A carboxylase carboxyl transferase subunit beta (291 aa).

The CoA carboxyltransferase N-terminal domain occupies 29 to 291 (IMTKCPQCKK…TGGEREWLEN (263 aa)). Zn(2+)-binding residues include cysteine 33, cysteine 36, cysteine 52, and cysteine 55. The C4-type zinc finger occupies 33–55 (CPQCKKIMLTKELDKNLRVCMNC).

It belongs to the AccD/PCCB family. In terms of assembly, acetyl-CoA carboxylase is a heterohexamer composed of biotin carboxyl carrier protein (AccB), biotin carboxylase (AccC) and two subunits each of ACCase subunit alpha (AccA) and ACCase subunit beta (AccD). Zn(2+) serves as cofactor.

Its subcellular location is the cytoplasm. The catalysed reaction is N(6)-carboxybiotinyl-L-lysyl-[protein] + acetyl-CoA = N(6)-biotinyl-L-lysyl-[protein] + malonyl-CoA. Its pathway is lipid metabolism; malonyl-CoA biosynthesis; malonyl-CoA from acetyl-CoA: step 1/1. Its function is as follows. Component of the acetyl coenzyme A carboxylase (ACC) complex. Biotin carboxylase (BC) catalyzes the carboxylation of biotin on its carrier protein (BCCP) and then the CO(2) group is transferred by the transcarboxylase to acetyl-CoA to form malonyl-CoA. The polypeptide is Acetyl-coenzyme A carboxylase carboxyl transferase subunit beta (Bacillus pumilus (strain SAFR-032)).